We begin with the raw amino-acid sequence, 449 residues long: MLEKVLIANRGEIALRILRACKELGIKTVAVHSTADRELMHLSLADESVCIGPAPATQSYLQIPAIIAAAEVTGATAIHPGYGFLAENADFAEQIERSGFTFVGPTAEVIRLMGDKVSAKDAMKRAGVPTVPGSDGPLPEDEETALAIAREVGYPVIIKAAGGGGGRGMRVVYDESELIKSAKLTRTEAGAAFGNPMVYLEKFLTNPRHVEVQVLSDGQGNAIHLGDRDCSLQRRHQKVIEEAPAPGIDEKARQEVFARCVQACIEIGYRGAGTFEFLYENGRFYFIEMNTRVQVEHPVSEMVTGVDIVKEMLRIASGEKLSIRQEDVVIRGHALECRINAEDPKTFMPSPGKVKHFHAPGGNGVRVDSHLYSGYSVPPNYDSLVGKVITYGADRDEALARMRNALDELIVDGIKTNTELHKDLVRDAAFCKGGVNIHYLEKKLGMDKH.

In terms of domain architecture, Biotin carboxylation spans 1–445 (MLEKVLIANR…NIHYLEKKLG (445 aa)). ATP contacts are provided by residues Lys116, Lys159, 165–166 (GG), 201–204 (EKFL), His209, and His236. In terms of domain architecture, ATP-grasp spans 120-317 (KDAMKRAGVP…IVKEMLRIAS (198 aa)). Residue Lys238 coordinates hydrogencarbonate. ATP-binding residues include Glu276 and Glu288. The Mg(2+) site is built by Glu276, Glu288, and Asn290. Mn(2+) is bound by residues Glu276, Glu288, and Asn290. Hydrogencarbonate-binding residues include Arg292, Val295, and Arg338. Arg292 is a catalytic residue. Arg338 lines the biotin pocket.

Acetyl-CoA carboxylase is a heterohexamer of biotin carboxyl carrier protein, biotin carboxylase and the two subunits of carboxyl transferase in a 2:2 complex. The cofactor is Mg(2+). Requires Mn(2+) as cofactor.

The catalysed reaction is N(6)-biotinyl-L-lysyl-[protein] + hydrogencarbonate + ATP = N(6)-carboxybiotinyl-L-lysyl-[protein] + ADP + phosphate + H(+). It functions in the pathway lipid metabolism; malonyl-CoA biosynthesis; malonyl-CoA from acetyl-CoA: step 1/1. Its function is as follows. This protein is a component of the acetyl coenzyme A carboxylase complex; first, biotin carboxylase catalyzes the carboxylation of the carrier protein and then the transcarboxylase transfers the carboxyl group to form malonyl-CoA. The chain is Biotin carboxylase (accC) from Pseudomonas aeruginosa (strain ATCC 15692 / DSM 22644 / CIP 104116 / JCM 14847 / LMG 12228 / 1C / PRS 101 / PAO1).